A 238-amino-acid chain; its full sequence is Ribonuclease PH (238 aa).

Residues Arg-86 and 124-126 (GTR) each bind phosphate.

It belongs to the RNase PH family. In terms of assembly, homohexameric ring arranged as a trimer of dimers.

The catalysed reaction is tRNA(n+1) + phosphate = tRNA(n) + a ribonucleoside 5'-diphosphate. Phosphorolytic 3'-5' exoribonuclease that plays an important role in tRNA 3'-end maturation. Removes nucleotide residues following the 3'-CCA terminus of tRNAs; can also add nucleotides to the ends of RNA molecules by using nucleoside diphosphates as substrates, but this may not be physiologically important. Probably plays a role in initiation of 16S rRNA degradation (leading to ribosome degradation) during starvation. This chain is Ribonuclease PH, found in Shigella flexneri serotype 5b (strain 8401).